Here is a 446-residue protein sequence, read N- to C-terminus: Chromosomal replication initiator protein DnaA (446 aa).

Positions 1 to 81 (MENISDLWNS…AKLAIRFIIP (81 aa)) are domain I, interacts with DnaA modulators. Residues 81 to 109 (PQSQAEEDIDLPPVKPNPAQDDSAHLPQS) are domain II. The tract at residues 110-326 (MLNPKYTFDT…GALIRVVAYS (217 aa)) is domain III, AAA+ region. The ATP site is built by G154, G156, K157, and T158. The interval 327–446 (SLINKDINAD…QVEEINGILK (120 aa)) is domain IV, binds dsDNA.

This sequence belongs to the DnaA family. As to quaternary structure, oligomerizes as a right-handed, spiral filament on DNA at oriC.

It is found in the cytoplasm. Its function is as follows. Plays an essential role in the initiation and regulation of chromosomal replication. ATP-DnaA binds to the origin of replication (oriC) to initiate formation of the DNA replication initiation complex once per cell cycle. Binds the DnaA box (a 9 base pair repeat at the origin) and separates the double-stranded (ds)DNA. Forms a right-handed helical filament on oriC DNA; dsDNA binds to the exterior of the filament while single-stranded (ss)DNA is stabiized in the filament's interior. The ATP-DnaA-oriC complex binds and stabilizes one strand of the AT-rich DNA unwinding element (DUE), permitting loading of DNA polymerase. After initiation quickly degrades to an ADP-DnaA complex that is not apt for DNA replication. Binds acidic phospholipids. The polypeptide is Chromosomal replication initiator protein DnaA (Bacillus cereus (strain B4264)).